Here is a 231-residue protein sequence, read N- to C-terminus: NADH-ubiquinone oxidoreductase chain 4 (231 aa).

6 helical membrane passes run 1–21 (PIAG…YGII), 34–54 (MFIP…LTCL), 63–85 (IAYS…TPWG), 89–111 (AMAL…NTTY), 128–148 (ILPM…AMPP), and 169–189 (TIIM…HMFL).

It belongs to the complex I subunit 4 family.

Its subcellular location is the mitochondrion membrane. The catalysed reaction is a ubiquinone + NADH + 5 H(+)(in) = a ubiquinol + NAD(+) + 4 H(+)(out). Its function is as follows. Core subunit of the mitochondrial membrane respiratory chain NADH dehydrogenase (Complex I) that is believed to belong to the minimal assembly required for catalysis. Complex I functions in the transfer of electrons from NADH to the respiratory chain. The immediate electron acceptor for the enzyme is believed to be ubiquinone. This is NADH-ubiquinone oxidoreductase chain 4 (MT-ND4) from Lachesis muta muta (Bushmaster).